The sequence spans 272 residues: Regulatory factor X-associated protein (272 aa).

Disordered stretches follow at residues 1–20, 74–142, and 175–195; these read MEAQGVAEGAGPGAASGVPH, LCEG…KTCT, and KKKKSDQALNCGGTASTGSAG. Residues 79–94 are compositionally biased toward acidic residues; that stretch reads GDGEEEAGEDEADLLD. Residues 163–178 carry the Nuclear localization signal motif; the sequence is KKHRNKMYKDKYKKKK. Residue Lys-198 forms a Glycyl lysine isopeptide (Lys-Gly) (interchain with G-Cter in SUMO2) linkage. The tract at residues 214-270 is C-terminal domain; that stretch reads TGSFGDRPARPTLLEQVLNQKRLSLLRSPEVVQFLQKQQQLLNQQVLEQRQQQFPGT.

In terms of assembly, the RFX heterotetrameric complex consists of 2 molecules of RFX5 and one each of RFXAP and RFX-B/RFXANK; with each subunit representing a separate complementation group. RFX forms cooperative DNA binding complexes with X2BP and CBF/NF-Y. RFX associates with CIITA to form an active transcriptional complex. In terms of processing, phosphorylated. As to expression, ubiquitous.

Its subcellular location is the nucleus. In terms of biological role, part of the RFX complex that binds to the X-box of MHC II promoters. This is Regulatory factor X-associated protein (RFXAP) from Homo sapiens (Human).